Reading from the N-terminus, the 669-residue chain is Zinc finger MYM-type protein 5 (669 aa).

Residues Lys-88, Lys-91, Lys-134, Lys-149, Lys-166, and Lys-225 each participate in a glycyl lysine isopeptide (Lys-Gly) (interchain with G-Cter in SUMO2) cross-link. MYM-type zinc fingers lie at residues 265–299 (HLFC…KKAN), 311–351 (QEFY…RHEV), 358–393 (HKLC…KSTG), and 404–431 (KRFC…ASEN). Residues Lys-443, Lys-455, Lys-462, and Lys-552 each participate in a glycyl lysine isopeptide (Lys-Gly) (interchain with G-Cter in SUMO2) cross-link.

As to quaternary structure, interacts (via N-terminal 120 amino acid region) with ETV5 (via C-terminal).

It localises to the nucleus. In terms of biological role, functions as a transcriptional regulator. This is Zinc finger MYM-type protein 5 (ZMYM5) from Homo sapiens (Human).